The chain runs to 478 residues: Aspartate ammonia-lyase (478 aa).

Positions 104, 143, 144, 145, and 190 each coordinate L-aspartate. Residues 320–329 (GSSIMPAKVN) are SS loop. Ser321 acts as the Proton acceptor in catalysis. Residues Ser322 and Lys327 each coordinate L-aspartate.

Belongs to the class-II fumarase/aspartase family. Aspartase subfamily. As to quaternary structure, homotetramer.

It catalyses the reaction L-aspartate = fumarate + NH4(+). Catalyzes the reversible conversion of L-aspartate to fumarate and ammonia. This Escherichia coli O157:H7 protein is Aspartate ammonia-lyase (aspA).